The chain runs to 329 residues: MQTLAENLTSQAISPTLEKLILTLANTSKEISHAVRHGALAGVLGATEQENVQGETQKKLDIITNDMLKDALKADGTVRGIASEEEDYVVEADANGEFLVCFDPLDGSSNIDINSLVGTIFSVLPAPAGELTEKSFLQAGHNQVAAGYVLYGPSTMLALTTGQGVQLFTLNPETNQFLLTNAAMAVSKDTGEFAINMSNQRFWEAPMQTYISDLLLGKIGPREKSFNMRWIAAMVGDVHRVLCRGGIFTYPTDNKNPEKPYKLRLMYEANPMAFLVEQAGGKASTGYETIMDIEPTAIHQRVAVILGSANEVDACLEYHGIDYSEEPAL.

4 residues coordinate Mg(2+): glutamate 84, aspartate 103, leucine 105, and aspartate 106. Substrate contacts are provided by residues 106–109, asparagine 196, and lysine 262; that span reads DGSS. Glutamate 268 is a Mg(2+) binding site.

This sequence belongs to the FBPase class 1 family. In terms of assembly, homotetramer. Requires Mg(2+) as cofactor.

It is found in the cytoplasm. The catalysed reaction is beta-D-fructose 1,6-bisphosphate + H2O = beta-D-fructose 6-phosphate + phosphate. The protein operates within carbohydrate biosynthesis; gluconeogenesis. The chain is Fructose-1,6-bisphosphatase class 1 from Shewanella halifaxensis (strain HAW-EB4).